The following is a 110-amino-acid chain: Nucleoprotein (110 aa).

The disordered stretch occupies residues 1-24 (MASRRSRPQAASFRNGRRRQPTSY).

The protein belongs to the arteriviridae nucleocapsid family.

It localises to the virion. In Equine arteritis virus (strain Bucyrus) (EAV), this protein is Nucleoprotein (N).